Consider the following 680-residue polypeptide: Collagen alpha-1(X) chain (680 aa).

The signal sequence occupies residues 1–18; that stretch reads MLPQIPFLLLMFLTLVHG. The interval 19-56 is nonhelical region (NC2); that stretch reads MFYAERYQTPTGIKGPLASPKTQYFIPYAIKSKGIPVR. Residues 54–531 form a disordered region; that stretch reads PVRGEQGIPG…PDGFIKAGQR (478 aa). Positions 57–519 are triple-helical region; the sequence is GEQGIPGPPG…PGPPGPPGQA (463 aa). Pro residues-rich tracts occupy residues 137–147 and 207–216; these read PRGPPGPPGIP and PQGPIGPPGP. Composition is skewed to low complexity over residues 303–321, 373–382, and 391–409; these read LPGL…APGA, PGARGARGPP, and PGEP…PGQK. The segment covering 410–419 has biased composition (gly residues); that stretch reads GDPGVGGTPG. 2 stretches are compositionally biased toward low complexity: residues 423–433 and 442–453; these read PVGPVGAKGVP and RGEPGIPGTRGP. Residues 506–516 show a composition bias toward pro residues; sequence LPGPPGPPGPP. A nonhelical region (NC1) region spans residues 520–680; sequence VMPDGFIKAG…SFSGFLVAPM (161 aa). One can recognise a C1q domain in the interval 547–680; the sequence is TGMPVSAFTV…SFSGFLVAPM (134 aa). 4 residues coordinate Ca(2+): D626, E627, L633, and D634.

As to quaternary structure, homotrimer. In terms of processing, prolines at the third position of the tripeptide repeating unit (G-X-Y) are hydroxylated in some or all of the chains.

Its subcellular location is the secreted. It is found in the extracellular space. The protein resides in the extracellular matrix. Functionally, type X collagen is a product of hypertrophic chondrocytes and has been localized to presumptive mineralization zones of hyaline cartilage. This chain is Collagen alpha-1(X) chain (Col10a1), found in Mus musculus (Mouse).